The sequence spans 156 residues: 3-dehydroquinate dehydratase (156 aa).

The active-site Proton acceptor is the Y31. 3 residues coordinate substrate: N83, H89, and D96. H109 acts as the Proton donor in catalysis. Substrate-binding positions include 110 to 111 (LS) and R120.

Belongs to the type-II 3-dehydroquinase family. Homododecamer.

It carries out the reaction 3-dehydroquinate = 3-dehydroshikimate + H2O. It participates in metabolic intermediate biosynthesis; chorismate biosynthesis; chorismate from D-erythrose 4-phosphate and phosphoenolpyruvate: step 3/7. Its function is as follows. Catalyzes a trans-dehydration via an enolate intermediate. In Chromobacterium violaceum (strain ATCC 12472 / DSM 30191 / JCM 1249 / CCUG 213 / NBRC 12614 / NCIMB 9131 / NCTC 9757 / MK), this protein is 3-dehydroquinate dehydratase.